The sequence spans 269 residues: MTNNVRGYLQLHPFHLVGPSPWPIFTSFSLMDLAFSIALNSHGYMANNFYIILSIITVLYSMTLWFKDIIAESTYLGDHTIAVKRGLNQGFLLFVVSEILIFASLFWAYLHSAVNPTMDLGMSWPPVGIDVISPAELPLLNTIILLASGVTITYAHHALINGNRANTLYGFIYSTLLIALFVMFQFLEYKYAGFTITDGVYGSTFYSLTGLHGLHMIMLTIMLVICTWRVYNYDFTNTSHVGAETTILYLHVLDVIWLFIYIIVYWWGS.

The next 7 helical transmembrane spans lie at 7–29 (GYLQ…TSFS), 51–71 (IILS…DIIA), 90–110 (GFLL…WAYL), 127–147 (VGID…ILLA), 167–187 (TLYG…FQFL), 205–225 (FYSL…MLVI), and 247–267 (ILYL…VYWW).

The protein belongs to the cytochrome c oxidase subunit 3 family. As to quaternary structure, component of the cytochrome c oxidase (complex IV, CIV), a multisubunit enzyme composed of a catalytic core of 3 subunits and several supernumerary subunits. The complex exists as a monomer or a dimer and forms supercomplexes (SCs) in the inner mitochondrial membrane with ubiquinol-cytochrome c oxidoreductase (cytochrome b-c1 complex, complex III, CIII).

Its subcellular location is the mitochondrion inner membrane. The catalysed reaction is 4 Fe(II)-[cytochrome c] + O2 + 8 H(+)(in) = 4 Fe(III)-[cytochrome c] + 2 H2O + 4 H(+)(out). Its function is as follows. Component of the cytochrome c oxidase, the last enzyme in the mitochondrial electron transport chain which drives oxidative phosphorylation. The respiratory chain contains 3 multisubunit complexes succinate dehydrogenase (complex II, CII), ubiquinol-cytochrome c oxidoreductase (cytochrome b-c1 complex, complex III, CIII) and cytochrome c oxidase (complex IV, CIV), that cooperate to transfer electrons derived from NADH and succinate to molecular oxygen, creating an electrochemical gradient over the inner membrane that drives transmembrane transport and the ATP synthase. Cytochrome c oxidase is the component of the respiratory chain that catalyzes the reduction of oxygen to water. Electrons originating from reduced cytochrome c in the intermembrane space (IMS) are transferred via the dinuclear copper A center (CU(A)) of subunit 2 and heme A of subunit 1 to the active site in subunit 1, a binuclear center (BNC) formed by heme A3 and copper B (CU(B)). The BNC reduces molecular oxygen to 2 water molecules using 4 electrons from cytochrome c in the IMS and 4 protons from the mitochondrial matrix. This chain is Cytochrome c oxidase subunit 3 (COX3), found in Candida parapsilosis (Yeast).